A 230-amino-acid chain; its full sequence is Orotidine 5'-phosphate decarboxylase (230 aa).

Substrate is bound by residues Asp-11, Lys-34, 61–70 (DLKLHDIPNT), Thr-117, Arg-179, Gln-188, Gly-208, and Arg-209. Residue Lys-63 is the Proton donor of the active site.

The protein belongs to the OMP decarboxylase family. Type 1 subfamily. In terms of assembly, homodimer.

The catalysed reaction is orotidine 5'-phosphate + H(+) = UMP + CO2. It participates in pyrimidine metabolism; UMP biosynthesis via de novo pathway; UMP from orotate: step 2/2. In terms of biological role, catalyzes the decarboxylation of orotidine 5'-monophosphate (OMP) to uridine 5'-monophosphate (UMP). The chain is Orotidine 5'-phosphate decarboxylase from Streptococcus equi subsp. zooepidemicus (strain MGCS10565).